We begin with the raw amino-acid sequence, 443 residues long: ATP-dependent protease ATPase subunit HslU (443 aa).

Residues isoleucine 20, 62–67 (GVGKTE), aspartate 255, glutamate 321, and arginine 393 contribute to the ATP site.

The protein belongs to the ClpX chaperone family. HslU subfamily. A double ring-shaped homohexamer of HslV is capped on each side by a ring-shaped HslU homohexamer. The assembly of the HslU/HslV complex is dependent on binding of ATP.

It is found in the cytoplasm. In terms of biological role, ATPase subunit of a proteasome-like degradation complex; this subunit has chaperone activity. The binding of ATP and its subsequent hydrolysis by HslU are essential for unfolding of protein substrates subsequently hydrolyzed by HslV. HslU recognizes the N-terminal part of its protein substrates and unfolds these before they are guided to HslV for hydrolysis. This is ATP-dependent protease ATPase subunit HslU from Helicobacter pylori (strain ATCC 700392 / 26695) (Campylobacter pylori).